Reading from the N-terminus, the 508-residue chain is GMP synthase [glutamine-hydrolyzing] (508 aa).

One can recognise a Glutamine amidotransferase type-1 domain in the interval 1-189 (MILVLDFGSQ…ALLVCGCEKT (189 aa)). Cys-78 acts as the Nucleophile in catalysis. Active-site residues include His-163 and Glu-165. The 194-residue stretch at 190–383 (WGMQHFAQRE…LGVSQDFLMH (194 aa)) folds into the GMPS ATP-PPase domain. 217–223 (SGGVDST) serves as a coordination point for ATP.

In terms of assembly, homodimer.

It carries out the reaction XMP + L-glutamine + ATP + H2O = GMP + L-glutamate + AMP + diphosphate + 2 H(+). The protein operates within purine metabolism; GMP biosynthesis; GMP from XMP (L-Gln route): step 1/1. Functionally, catalyzes the synthesis of GMP from XMP. In Helicobacter pylori (strain G27), this protein is GMP synthase [glutamine-hydrolyzing].